We begin with the raw amino-acid sequence, 152 residues long: Nucleoside diphosphate kinase (152 aa).

Residues lysine 10, phenylalanine 58, arginine 86, threonine 92, arginine 103, and asparagine 113 each coordinate ATP. Residue histidine 116 is the Pros-phosphohistidine intermediate of the active site.

The protein belongs to the NDK family. The cofactor is Mg(2+).

Its subcellular location is the cytoplasm. It catalyses the reaction a 2'-deoxyribonucleoside 5'-diphosphate + ATP = a 2'-deoxyribonucleoside 5'-triphosphate + ADP. It carries out the reaction a ribonucleoside 5'-diphosphate + ATP = a ribonucleoside 5'-triphosphate + ADP. Its function is as follows. Major role in the synthesis of nucleoside triphosphates other than ATP. The ATP gamma phosphate is transferred to the NDP beta phosphate via a ping-pong mechanism, using a phosphorylated active-site intermediate. The polypeptide is Nucleoside diphosphate kinase (Methanosphaera stadtmanae (strain ATCC 43021 / DSM 3091 / JCM 11832 / MCB-3)).